We begin with the raw amino-acid sequence, 357 residues long: Arginine kinase (357 aa).

Ala-2 carries the N-acetylalanine modification. Positions 9–91 (KLEEGFKKLE…FDPIIEDYHK (83 aa)) constitute a Phosphagen kinase N-terminal domain. An L-arginine-binding site is contributed by 64–68 (GVGVY). The region spanning 119-356 (FVISTRVRCG…LELIKIEKEM (238 aa)) is the Phosphagen kinase C-terminal domain. ATP contacts are provided by residues 122–126 (STRVR) and His-185. An L-arginine-binding site is contributed by Glu-225. Arg-229 serves as a coordination point for ATP. Cys-271 serves as a coordination point for L-arginine. ATP-binding positions include 280 to 284 (RASVH) and 309 to 314 (RGTRGE). Glu-314 lines the L-arginine pocket.

It belongs to the ATP:guanido phosphotransferase family.

The enzyme catalyses L-arginine + ATP = N(omega)-phospho-L-arginine + ADP + H(+). The polypeptide is Arginine kinase (Callinectes sapidus (Blue crab)).